Here is a 495-residue protein sequence, read N- to C-terminus: Glycerol kinase (495 aa).

Thr11 provides a ligand contact to ADP. Residues Thr11, Thr12, and Ser13 each contribute to the ATP site. Position 11 (Thr11) interacts with sn-glycerol 3-phosphate. Arg15 contacts ADP. Sn-glycerol 3-phosphate is bound by residues Arg81, Glu82, Tyr133, and Asp242. Residues Arg81, Glu82, Tyr133, Asp242, and Gln243 each coordinate glycerol. Positions 264 and 307 each coordinate ADP. 4 residues coordinate ATP: Thr264, Gly307, Gln311, and Gly408. Gly408 and Asn412 together coordinate ADP.

Belongs to the FGGY kinase family.

The enzyme catalyses glycerol + ATP = sn-glycerol 3-phosphate + ADP + H(+). It functions in the pathway polyol metabolism; glycerol degradation via glycerol kinase pathway; sn-glycerol 3-phosphate from glycerol: step 1/1. Inhibited by fructose 1,6-bisphosphate (FBP). Its function is as follows. Key enzyme in the regulation of glycerol uptake and metabolism. Catalyzes the phosphorylation of glycerol to yield sn-glycerol 3-phosphate. The protein is Glycerol kinase of Alkalilimnicola ehrlichii (strain ATCC BAA-1101 / DSM 17681 / MLHE-1).